A 176-amino-acid polypeptide reads, in one-letter code: Flavodoxin-like domain-containing protein BilS (176 aa).

It participates in porphyrin-containing compound metabolism; protoheme degradation. In terms of biological role, together with BilR, catalyzes reduction of mesobilirubin and/or bilirubin to urobilinogen, a key step during heme degradation. BilS is probably involved in electron transfer for the bilirubin reductase BilR. The polypeptide is Flavodoxin-like domain-containing protein BilS (Clostridioides difficile (strain CD3)).